Here is a 554-residue protein sequence, read N- to C-terminus: (E)-beta-caryophyllene synthase (554 aa).

Residues D313 and D317 each coordinate Mn(2+). The DDXXD motif signature appears at 313–317 (DDTYD). 2 homodimerization regions span residues 319–325 (YGTLDEL) and 391–427 (EAQW…LAVI). Mn(2+) contacts are provided by D457 and E465.

It belongs to the terpene synthase family. As to quaternary structure, homodimer. Mn(2+) serves as cofactor. It depends on Mg(2+) as a cofactor. As to expression, expressed in peltate glandular trichomes. Present at low levels in flowers, leaves and stems.

The catalysed reaction is (2E,6E)-farnesyl diphosphate = (-)-(E)-beta-caryophyllene + diphosphate. The enzyme catalyses (2E,6E)-farnesyl diphosphate = alpha-humulene + diphosphate. It functions in the pathway secondary metabolite biosynthesis; terpenoid biosynthesis. Involved in the biosynthesis of phenolic sesquiterpenes natural products. Sesquiterpene synthase converting (2E,6E)-farnesyl diphosphate (FPP) to (E)-beta-caryophyllene and alpha-humulene. The chain is (E)-beta-caryophyllene synthase from Origanum vulgare (Wild marjoram).